Consider the following 157-residue polypeptide: Small ribosomal subunit protein uS7 (157 aa).

It belongs to the universal ribosomal protein uS7 family. In terms of assembly, part of the 30S ribosomal subunit. Contacts proteins S9 and S11.

Its function is as follows. One of the primary rRNA binding proteins, it binds directly to 16S rRNA where it nucleates assembly of the head domain of the 30S subunit. Is located at the subunit interface close to the decoding center, probably blocks exit of the E-site tRNA. This Herpetosiphon aurantiacus (strain ATCC 23779 / DSM 785 / 114-95) protein is Small ribosomal subunit protein uS7.